The sequence spans 461 residues: Ribitol-5-phosphate transferase FKTN (461 aa).

Residues 1–7 are Cytoplasmic-facing; sequence MSRINKN. The tract at residues 6 to 27 is required and sufficient for interaction with POMGNT1; it reads KNVVLALLTLTSSAFLLFQLYY. Residues 8–28 form a helical; Signal-anchor for type II membrane protein membrane-spanning segment; sequence VVLALLTLTSSAFLLFQLYYY. The Lumenal segment spans residues 29–461; that stretch reads KHYLSTRNGA…SEWDEVIQLY (433 aa). Asn-92 carries N-linked (GlcNAc...) asparagine glycosylation.

This sequence belongs to the LicD transferase family. In terms of assembly, forms a complex composed of FKTN/fukutin, FKRP and RXYLT1/TMEM5. Interacts (via transmembrane domain) with POMGNT1; the interaction is direct and is required for normal POMGNT1 location in Golgi membranes. In terms of tissue distribution, expressed in the retina (at protein level).

It localises to the golgi apparatus membrane. The protein resides in the cytoplasm. Its subcellular location is the nucleus. The enzyme catalyses 3-O-[beta-D-GalNAc-(1-&gt;3)-beta-D-GlcNAc-(1-&gt;4)-(O-6-P-alpha-D-Man)]-Thr-[protein] + CDP-L-ribitol = 3-O-[Rib-ol-P-3-beta-D-GalNAc-(1-&gt;3)-beta-D-GlcNAc-(1-&gt;4)-(O-6-P-alpha-D-Man)]-Thr-[protein] + CMP + H(+). It functions in the pathway protein modification; protein glycosylation. Functionally, catalyzes the transfer of CDP-ribitol to the distal N-acetylgalactosamine of the phosphorylated O-mannosyl trisaccharide (N-acetylgalactosamine-beta-3-N-acetylglucosamine-beta-4-(phosphate-6-)mannose), a carbohydrate structure present in alpha-dystroglycan (DAG1). This constitutes the first step in the formation of the ribitol 5-phosphate tandem repeat which links the phosphorylated O-mannosyl trisaccharide to the ligand binding moiety composed of repeats of 3-xylosyl-alpha-1,3-glucuronic acid-beta-1. May interact with and reinforce a large complex encompassing the outside and inside of muscle membranes. Could be involved in brain development. This Macaca fascicularis (Crab-eating macaque) protein is Ribitol-5-phosphate transferase FKTN.